The chain runs to 235 residues: MTRVVISVGGSVLVPSLDAHRLKEWAEALINLTNAGIQIFAVVGGGGEARRYIEACRDIGLDEASSDEIGIQVTRINAALLIGALKEYAYPVVAESYREAKTAAVSGKIVVMGGVTPGQTTDAVAAVLAEEVGASMMINMTAIDGIYTADPKKDAKAKRHDILSPQGLIDLIMKEKMCAGSNMVIDLVAAKITERSGIPLVVIDGRDPALIEKALLKGEFAGTIVGNSAIRFPIV.

ATP is bound at residue 10–11; that stretch reads GS. Residue Gly-45 coordinates UMP. Residues Gly-46 and Arg-50 each coordinate ATP. UMP contacts are provided by residues Asp-67 and 115 to 121; that span reads VTPGQTT. Thr-141, Tyr-147, and Asp-150 together coordinate ATP.

It belongs to the UMP kinase family. In terms of assembly, homohexamer.

It is found in the cytoplasm. It carries out the reaction UMP + ATP = UDP + ADP. It participates in pyrimidine metabolism; CTP biosynthesis via de novo pathway; UDP from UMP (UMPK route): step 1/1. Inhibited by UTP. Functionally, catalyzes the reversible phosphorylation of UMP to UDP. The polypeptide is Uridylate kinase (Methanocorpusculum labreanum (strain ATCC 43576 / DSM 4855 / Z)).